A 221-amino-acid chain; its full sequence is Ktr system potassium uptake protein C (221 aa).

Positions lysine 2–valine 118 constitute an RCK N-terminal domain. NAD(+)-binding positions include arginine 12, aspartate 32–aspartate 34, aspartate 52–serine 53, isoleucine 74–glutamate 76, lysine 99–glutamine 101, histidine 105, and glutamate 121. An RCK C-terminal domain is found at asparagine 135 to histidine 219.

This sequence belongs to the KtrA potassium transport family. As to quaternary structure, homodimer, tetramer (dimer of homodimer) and octamer (tetramer of homodimer). Part of the KtrCD complex formed by an octameric catalytic ring of KtrC and a membrane associated dimer of KtrD forming a potassium channel.

The protein localises to the cell membrane. Catalytic subunit of the KtrCD potassium uptake transporter. The 2 major potassium transporter complexes KtrAB and KtrCD confer resistance to both suddenly imposed and prolonged osmotic stress. In Bacillus subtilis (strain 168), this protein is Ktr system potassium uptake protein C (ktrC).